Consider the following 315-residue polypeptide: Thioredoxin reductase (315 aa).

Position 45–52 (45–52) interacts with FAD; the sequence is EGNTPGGK. Residues cysteine 145 and cysteine 148 are joined by a disulfide bond. 288–297 is a binding site for FAD; the sequence is DCRSKSFRQI.

This sequence belongs to the class-II pyridine nucleotide-disulfide oxidoreductase family. As to quaternary structure, homodimer. The cofactor is FAD.

It is found in the cytoplasm. It carries out the reaction [thioredoxin]-dithiol + NADP(+) = [thioredoxin]-disulfide + NADPH + H(+). This Mycoplasma genitalium (strain ATCC 33530 / DSM 19775 / NCTC 10195 / G37) (Mycoplasmoides genitalium) protein is Thioredoxin reductase (trxB).